Here is a 267-residue protein sequence, read N- to C-terminus: L-aspartate dehydrogenase (267 aa).

Positions 124 and 190 each coordinate NAD(+). The active site involves H218.

It belongs to the L-aspartate dehydrogenase family.

The enzyme catalyses L-aspartate + NADP(+) + H2O = oxaloacetate + NH4(+) + NADPH + H(+). It catalyses the reaction L-aspartate + NAD(+) + H2O = oxaloacetate + NH4(+) + NADH + H(+). It participates in cofactor biosynthesis; NAD(+) biosynthesis; iminoaspartate from L-aspartate (dehydrogenase route): step 1/1. Specifically catalyzes the NAD or NADP-dependent dehydrogenation of L-aspartate to iminoaspartate. In Methanococcus maripaludis (strain C6 / ATCC BAA-1332), this protein is L-aspartate dehydrogenase.